Reading from the N-terminus, the 122-residue chain is Large ribosomal subunit protein uL14c (122 aa).

The protein belongs to the universal ribosomal protein uL14 family. In terms of assembly, part of the 50S ribosomal subunit.

Its subcellular location is the plastid. It is found in the chloroplast. Its function is as follows. Binds to 23S rRNA. In Daucus carota (Wild carrot), this protein is Large ribosomal subunit protein uL14c.